The following is a 224-amino-acid chain: Rhodanese-like domain-containing protein 14, chloroplastic (224 aa).

The transit peptide at 1-48 (MASLTSIATPYPSSSQALRLKSSGNTLFSAGVRSAAMVSGHKTLKIQC) directs the protein to the chloroplast. A Rhodanese domain is found at 87-220 (KENNFVILDV…WGKEGLPVET (134 aa)). The active-site Cysteine persulfide intermediate is Cys-166.

Its subcellular location is the plastid. It is found in the chloroplast. The chain is Rhodanese-like domain-containing protein 14, chloroplastic from Arabidopsis thaliana (Mouse-ear cress).